The sequence spans 115 residues: V-type proton ATPase subunit G (115 aa).

Belongs to the V-ATPase G subunit family. In terms of assembly, V-ATPase is a heteromultimeric enzyme composed of a peripheral catalytic V1 complex (components A to H) attached to an integral membrane V0 proton pore complex (components: a, c, c', c'', d, e, f and VOA1).

The protein localises to the vacuole membrane. Subunit of the V1 complex of vacuolar(H+)-ATPase (V-ATPase), a multisubunit enzyme composed of a peripheral complex (V1) that hydrolyzes ATP and a membrane integral complex (V0) that translocates protons. V-ATPase is responsible for acidifying and maintaining the pH of intracellular compartments. The chain is V-type proton ATPase subunit G (vma-10) from Neurospora crassa (strain ATCC 24698 / 74-OR23-1A / CBS 708.71 / DSM 1257 / FGSC 987).